We begin with the raw amino-acid sequence, 143 residues long: Large ribosomal subunit protein uL15 (143 aa).

Positions 1–57 are disordered; the sequence is MQLNNLKPAAGSKHAKRRVGRGIGSGLGKTAGRGHKGQKSRSGGFHKVGFEGGQMPL. Positions 21 to 31 are enriched in gly residues; sequence RGIGSGLGKTA.

Belongs to the universal ribosomal protein uL15 family. In terms of assembly, part of the 50S ribosomal subunit.

Functionally, binds to the 23S rRNA. The sequence is that of Large ribosomal subunit protein uL15 from Ralstonia nicotianae (strain ATCC BAA-1114 / GMI1000) (Ralstonia solanacearum).